Reading from the N-terminus, the 533-residue chain is GDP-fucose protein O-fucosyltransferase 4 (533 aa).

Topologically, residues 1–20 (MSAGCTQLVWGGRLHWGASH) are cytoplasmic. A helical; Signal-anchor for type II membrane protein transmembrane segment spans residues 21-37 (LLSCLLALCALWVLAAA). Residues 38–533 (EPTEGGSANV…ETYIKRSMNH (496 aa)) lie on the Lumenal side of the membrane. Asn-148, Asn-206, and Asn-358 each carry an N-linked (GlcNAc...) asparagine glycan. The cysteines at positions 429 and 432 are disulfide-linked. The N-linked (GlcNAc...) asparagine glycan is linked to Asn-511.

The protein belongs to the glycosyltransferase 10 family.

The protein resides in the endoplasmic reticulum membrane. It carries out the reaction L-threonyl-[protein] + GDP-beta-L-fucose = 3-O-(alpha-L-fucosyl)-L-threonyl-[protein] + GDP + H(+). The catalysed reaction is L-seryl-[protein] + GDP-beta-L-fucose = 3-O-(alpha-L-fucosyl)-L-seryl-[protein] + GDP + H(+). It functions in the pathway protein modification; protein glycosylation. In terms of biological role, protein O-fucosyltransferase that specifically catalyzes O-fucosylation of serine or threonine residues in EMI domains of target proteins. Attaches fucose through an O-glycosidic linkage. O-fucosylation of EMI domain-containing proteins may be required for facilitating protein folding and secretion. This Xenopus tropicalis (Western clawed frog) protein is GDP-fucose protein O-fucosyltransferase 4 (fut11).